A 187-amino-acid chain; its full sequence is Elongation factor P (187 aa).

This sequence belongs to the elongation factor P family.

The protein localises to the cytoplasm. Its pathway is protein biosynthesis; polypeptide chain elongation. Its function is as follows. Involved in peptide bond synthesis. Stimulates efficient translation and peptide-bond synthesis on native or reconstituted 70S ribosomes in vitro. Probably functions indirectly by altering the affinity of the ribosome for aminoacyl-tRNA, thus increasing their reactivity as acceptors for peptidyl transferase. The polypeptide is Elongation factor P (Nocardioides sp. (strain ATCC BAA-499 / JS614)).